We begin with the raw amino-acid sequence, 215 residues long: Cytochrome b6 (215 aa).

Residues 32–52 traverse the membrane as a helical segment; sequence IFYCLGGITLTCFLIQFATGF. Heme c is bound at residue Cys35. Heme b contacts are provided by His86 and His100. The next 3 helical transmembrane spans lie at 90–110, 116–136, and 186–206; these read ASMM…TGGF, LTWV…VTGY, and LHTF…FLMI. His187 and His202 together coordinate heme b.

Belongs to the cytochrome b family. PetB subfamily. In terms of assembly, the 4 large subunits of the cytochrome b6-f complex are cytochrome b6, subunit IV (17 kDa polypeptide, PetD), cytochrome f and the Rieske protein, while the 4 small subunits are PetG, PetL, PetM and PetN. The complex functions as a dimer. It depends on heme b as a cofactor. Heme c is required as a cofactor.

It localises to the cellular thylakoid membrane. Its function is as follows. Component of the cytochrome b6-f complex, which mediates electron transfer between photosystem II (PSII) and photosystem I (PSI), cyclic electron flow around PSI, and state transitions. The polypeptide is Cytochrome b6 (Synechococcus elongatus (strain ATCC 33912 / PCC 7942 / FACHB-805) (Anacystis nidulans R2)).